The following is a 519-amino-acid chain: Acetylcholine receptor subunit gamma (519 aa).

The N-terminal stretch at 1-22 (MQGGQRPHLLLLLLAVCLGAQS) is a signal peptide. Over 23–240 (RNQEERLLAD…VVFYLLIQRK (218 aa)) the chain is Extracellular. Residues Asn52 and Asn163 are each glycosylated (N-linked (GlcNAc...) asparagine). A disulfide bond links Cys150 and Cys164. Transmembrane regions (helical) follow at residues 241–265 (PLFY…IYFL), 274–292 (CTVA…FLVA), and 308–329 (YLTF…VLNV). Residues 330 to 476 (SLRSPHTHSM…WLLVGRVLDR (147 aa)) are Cytoplasmic-facing. The helical transmembrane segment at 477 to 497 (VCFLAMLSLFICGTAGIFLMA) threads the bilayer.

The protein belongs to the ligand-gated ion channel (TC 1.A.9) family. Acetylcholine receptor (TC 1.A.9.1) subfamily. Gamma/CHRNG sub-subfamily. In terms of assembly, pentamer of two alpha chains, and one each of the beta, delta, and gamma (in immature muscle) or epsilon (in mature muscle) chains. At least in myotubes of skeletal muscle.

The protein localises to the postsynaptic cell membrane. The protein resides in the cell membrane. The catalysed reaction is K(+)(in) = K(+)(out). It catalyses the reaction Na(+)(in) = Na(+)(out). In terms of biological role, after binding acetylcholine, the AChR responds by an extensive change in conformation that affects all subunits and leads to opening of an ion-conducting channel across the plasma membrane. The polypeptide is Acetylcholine receptor subunit gamma (Chrng) (Mus musculus (Mouse)).